We begin with the raw amino-acid sequence, 318 residues long: Pantothenate kinase (318 aa).

96–103 (GSVAVGKS) is an ATP binding site.

The protein belongs to the prokaryotic pantothenate kinase family.

The protein localises to the cytoplasm. The catalysed reaction is (R)-pantothenate + ATP = (R)-4'-phosphopantothenate + ADP + H(+). The protein operates within cofactor biosynthesis; coenzyme A biosynthesis; CoA from (R)-pantothenate: step 1/5. The protein is Pantothenate kinase of Coxiella burnetii (strain CbuK_Q154) (Coxiella burnetii (strain Q154)).